The primary structure comprises 66 residues: Large ribosomal subunit protein bL35 (66 aa).

Belongs to the bacterial ribosomal protein bL35 family.

The polypeptide is Large ribosomal subunit protein bL35 (Lysinibacillus sphaericus (strain C3-41)).